We begin with the raw amino-acid sequence, 421 residues long: Gamma-glutamyl phosphate reductase (421 aa).

The protein belongs to the gamma-glutamyl phosphate reductase family.

It is found in the cytoplasm. It carries out the reaction L-glutamate 5-semialdehyde + phosphate + NADP(+) = L-glutamyl 5-phosphate + NADPH + H(+). It functions in the pathway amino-acid biosynthesis; L-proline biosynthesis; L-glutamate 5-semialdehyde from L-glutamate: step 2/2. In terms of biological role, catalyzes the NADPH-dependent reduction of L-glutamate 5-phosphate into L-glutamate 5-semialdehyde and phosphate. The product spontaneously undergoes cyclization to form 1-pyrroline-5-carboxylate. The chain is Gamma-glutamyl phosphate reductase from Azotobacter vinelandii (strain DJ / ATCC BAA-1303).